A 154-amino-acid polypeptide reads, in one-letter code: MTHCCSPCCQPTCCRTTCCRTTCWKPTTVTTCSSTPCCQPSCCVSSCCQPCCRPACCQNTCCRTTCCQPTCLSSCCGQTSCGSSCGQSSSCAPVYCRRTCYYPTTVCLPGCLNQSCGSSCCQPCCRPACCETTCCRTTCFQPTCVSSCCQPSCC.

Tandem repeats lie at residues 8–12 (CCQPT), 13–17 (CCRTT), 18–22 (CCRTT), 37–41 (CCQPS), 42–46 (CCVSS), 51–55 (CCRPA), 56–60 (CCQNT), 61–65 (CCRTT), 66–70 (CCQPT), 75–79 (CCGQT), 124–128 (CCRPA), 129–133 (CCETT), 134–137 (CCRT), and 148–152 (CCQPS). The 14 X 5 AA repeats of C-C-[RQVGE]-[SPSTNQ]-[TASL] stretch occupies residues 8-152 (CCQPTCCRTT…TCVSSCCQPS (145 aa)).

The protein belongs to the KRTAP type 9 family. As to quaternary structure, interacts with hair keratins.

In the hair cortex, hair keratin intermediate filaments are embedded in an interfilamentous matrix, consisting of hair keratin-associated proteins (KRTAP), which are essential for the formation of a rigid and resistant hair shaft through their extensive disulfide bond cross-linking with abundant cysteine residues of hair keratins. The matrix proteins include the high-sulfur and high-glycine-tyrosine keratins. The protein is Keratin-associated protein 9-9 (KRTAP9-9) of Homo sapiens (Human).